Consider the following 700-residue polypeptide: Ribonucleoside-diphosphate reductase subunit alpha (700 aa).

Substrate is bound by residues Thr153, 169-170 (SC), Gly198, 380-384 (NLCSE), and 580-584 (PTGSI). A disulfide bridge connects residues Cys170 and Cys409. The active-site Proton acceptor is Asn380. Cys382 serves as the catalytic Cysteine radical intermediate. Glu384 serves as the catalytic Proton acceptor.

The protein belongs to the ribonucleoside diphosphate reductase large chain family. In terms of assembly, tetramer of two alpha and two beta subunits.

It carries out the reaction a 2'-deoxyribonucleoside 5'-diphosphate + [thioredoxin]-disulfide + H2O = a ribonucleoside 5'-diphosphate + [thioredoxin]-dithiol. Its activity is regulated as follows. Under complex allosteric control mediated by deoxynucleoside triphosphates and ATP binding. The type of nucleotide bound at the specificity site determines substrate preference. It seems probable that ATP makes the enzyme reduce CDP and UDP, dGTP favors ADP reduction and dTTP favors GDP reduction. Its function is as follows. Provides the precursors necessary for DNA synthesis. Catalyzes the biosynthesis of deoxyribonucleotides from the corresponding ribonucleotides. This is Ribonucleoside-diphosphate reductase subunit alpha from Bacillus subtilis (strain 168).